A 299-amino-acid polypeptide reads, in one-letter code: GTPase Era (299 aa).

One can recognise an Era-type G domain in the interval 4-171 (KSGFVAILGR…IKLLTDNLEE (168 aa)). Residues 12 to 19 (GRPNVGKS) form a G1 region. 12 to 19 (GRPNVGKS) is a GTP binding site. A G2 region spans residues 38-42 (QTTRN). The tract at residues 59-62 (DTPG) is G3. Residues 59 to 63 (DTPGI) and 121 to 124 (NKID) each bind GTP. Positions 121–124 (NKID) are G4. The tract at residues 150 to 152 (ISA) is G5. One can recognise a KH type-2 domain in the interval 202–280 (TQQEVPHSVA…YLETWVKVKK (79 aa)).

Belongs to the TRAFAC class TrmE-Era-EngA-EngB-Septin-like GTPase superfamily. Era GTPase family. In terms of assembly, monomer.

It is found in the cytoplasm. It localises to the cell membrane. Functionally, an essential GTPase that binds both GDP and GTP, with rapid nucleotide exchange. Plays a role in 16S rRNA processing and 30S ribosomal subunit biogenesis and possibly also in cell cycle regulation and energy metabolism. This chain is GTPase Era, found in Streptococcus agalactiae serotype III (strain NEM316).